Consider the following 105-residue polypeptide: UPF0060 membrane protein Rmet_4032 (105 aa).

A run of 4 helical transmembrane segments spans residues V4–W24, G28–L48, A60–V80, and P82–F102.

The protein belongs to the UPF0060 family.

It is found in the cell inner membrane. The polypeptide is UPF0060 membrane protein Rmet_4032 (Cupriavidus metallidurans (strain ATCC 43123 / DSM 2839 / NBRC 102507 / CH34) (Ralstonia metallidurans)).